The primary structure comprises 479 residues: Aldehyde dehydrogenase (479 aa).

190–195 (GSSKVG) serves as a coordination point for NAD(+). The active-site Proton acceptor is the Glu-212. Cys-247 serves as the catalytic Nucleophile.

Belongs to the aldehyde dehydrogenase family.

The protein resides in the plastid. It is found in the amyloplast. It localises to the chloroplast. The catalysed reaction is an aldehyde + NAD(+) + H2O = a carboxylate + NADH + 2 H(+). Oxidizes nonanal, propionaldehyde and acetaldehyde in vitro, in the following decreasing order of reactivity: nonanal, propionaldehyde, acetaldehyde. This Craterostigma plantagineum (Blue gem) protein is Aldehyde dehydrogenase (ALDH).